The primary structure comprises 115 residues: Large ribosomal subunit protein bL20c (115 aa).

The protein belongs to the bacterial ribosomal protein bL20 family.

It localises to the plastid. It is found in the chloroplast. Binds directly to 23S ribosomal RNA and is necessary for the in vitro assembly process of the 50S ribosomal subunit. It is not involved in the protein synthesizing functions of that subunit. The sequence is that of Large ribosomal subunit protein bL20c from Chlorokybus atmophyticus (Soil alga).